A 431-amino-acid chain; its full sequence is 3-phosphoshikimate 1-carboxyvinyltransferase (431 aa).

Positions 21, 22, and 26 each coordinate 3-phosphoshikimate. Lys21 contributes to the phosphoenolpyruvate binding site. 2 residues coordinate phosphoenolpyruvate: Gly93 and Arg122. Residues Ser167, Gln169, Asp318, and Lys345 each coordinate 3-phosphoshikimate. Position 169 (Gln169) interacts with phosphoenolpyruvate. Residue Asp318 is the Proton acceptor of the active site. Arg349 and Arg391 together coordinate phosphoenolpyruvate.

The protein belongs to the EPSP synthase family. Monomer.

The protein resides in the cytoplasm. The enzyme catalyses 3-phosphoshikimate + phosphoenolpyruvate = 5-O-(1-carboxyvinyl)-3-phosphoshikimate + phosphate. The protein operates within metabolic intermediate biosynthesis; chorismate biosynthesis; chorismate from D-erythrose 4-phosphate and phosphoenolpyruvate: step 6/7. Catalyzes the transfer of the enolpyruvyl moiety of phosphoenolpyruvate (PEP) to the 5-hydroxyl of shikimate-3-phosphate (S3P) to produce enolpyruvyl shikimate-3-phosphate and inorganic phosphate. The polypeptide is 3-phosphoshikimate 1-carboxyvinyltransferase (Roseiflexus castenholzii (strain DSM 13941 / HLO8)).